A 750-amino-acid chain; its full sequence is Photosystem I P700 chlorophyll a apoprotein A1 (750 aa).

The next 8 helical transmembrane spans lie at 70 to 93 (VFSA…FHGA), 156 to 179 (LYCT…FHYH), 195 to 219 (LNHH…HVSL), 291 to 309 (IAHH…GHMY), 346 to 369 (WHAQ…HHMY), 385 to 411 (LSLF…IFMV), 433 to 455 (AIIS…LYIH), and 531 to 549 (FLVH…LILL). [4Fe-4S] cluster-binding residues include C573 and C582. 2 consecutive transmembrane segments (helical) span residues 589 to 610 (HVFL…HFSW) and 664 to 686 (LSAY…MFLF). A chlorophyll a'-binding site is contributed by H675. Chlorophyll a is bound by residues M683 and Y691. W692 serves as a coordination point for phylloquinone. Residues 724–744 (AVGVTHYLLGGIATTWAFFLA) traverse the membrane as a helical segment.

The protein belongs to the PsaA/PsaB family. The PsaA/B heterodimer binds the P700 chlorophyll special pair and subsequent electron acceptors. PSI consists of a core antenna complex that captures photons, and an electron transfer chain that converts photonic excitation into a charge separation. The eukaryotic PSI reaction center is composed of at least 11 subunits. The cofactor is P700 is a chlorophyll a/chlorophyll a' dimer, A0 is one or more chlorophyll a, A1 is one or both phylloquinones and FX is a shared 4Fe-4S iron-sulfur center..

Its subcellular location is the plastid. It localises to the chloroplast thylakoid membrane. The catalysed reaction is reduced [plastocyanin] + hnu + oxidized [2Fe-2S]-[ferredoxin] = oxidized [plastocyanin] + reduced [2Fe-2S]-[ferredoxin]. Its function is as follows. PsaA and PsaB bind P700, the primary electron donor of photosystem I (PSI), as well as the electron acceptors A0, A1 and FX. PSI is a plastocyanin-ferredoxin oxidoreductase, converting photonic excitation into a charge separation, which transfers an electron from the donor P700 chlorophyll pair to the spectroscopically characterized acceptors A0, A1, FX, FA and FB in turn. Oxidized P700 is reduced on the lumenal side of the thylakoid membrane by plastocyanin. This chain is Photosystem I P700 chlorophyll a apoprotein A1, found in Arabidopsis thaliana (Mouse-ear cress).